The chain runs to 1894 residues: Plexin-A2 (1894 aa).

An N-terminal signal peptide occupies residues 1–34 (MEQRRFYLRAMQADNLSVVLLSVAWLLLARGTTG). 2 N-linked (GlcNAc...) asparagine glycosylation sites follow: Asn-15 and Asn-76. One can recognise a Sema domain in the interval 35–508 (MPQYSTFHSE…SERQVTRVPV (474 aa)). Residues 35–1237 (MPQYSTFHSE…VISDSLLTLP (1203 aa)) lie on the Extracellular side of the membrane. 2 cysteine pairs are disulfide-bonded: Cys-94/Cys-103 and Cys-129/Cys-137. Residues Asn-163 and Asn-327 are each glycosylated (N-linked (GlcNAc...) asparagine). Disulfide bonds link Cys-284/Cys-405, Cys-300/Cys-356, Cys-374/Cys-393, Cys-511/Cys-528, Cys-517/Cys-559, Cys-520/Cys-537, Cys-531/Cys-543, and Cys-594/Cys-613. N-linked (GlcNAc...) asparagine glycosylation is found at Asn-598, Asn-696, and Asn-756. 4 consecutive IPT/TIG domains span residues 858-951 (PQIT…QYTF), 954-1037 (PSVL…QFEY), 1041-1139 (PRVQ…KFIY), and 1143-1228 (PTFE…SVSV). N-linked (GlcNAc...) asparagine glycosylation is found at Asn-1180 and Asn-1205. A helical transmembrane segment spans residues 1238 to 1258 (AIISIAAGGSLLLIIVIIVLI). The Cytoplasmic portion of the chain corresponds to 1259 to 1894 (AYKRKSREND…HLINAMSIES (636 aa)). Residues 1261 to 1310 (KRKSRENDLTLKRLQMQMDNLESRVALECKEAFAELQTDINELTSDLDRS) adopt a coiled-coil conformation. The residue at position 1612 (Ser-1612) is a Phosphoserine.

It belongs to the plexin family. In terms of assembly, homodimer. Interacts with RND1. Interacts directly with NRP1 and NRP2. The PLXNA2 homodimer interacts with a SEMA6A homodimer, giving rise to a heterotetramer.

The protein localises to the cell membrane. Functionally, coreceptor for SEMA3A and SEMA6A. Necessary for signaling by SEMA6A and class 3 semaphorins and subsequent remodeling of the cytoskeleton. Plays a role in axon guidance, invasive growth and cell migration. Class 3 semaphorins bind to a complex composed of a neuropilin and a plexin. The plexin modulates the affinity of the complex for specific semaphorins, and its cytoplasmic domain is required for the activation of down-stream signaling events in the cytoplasm. This Mus musculus (Mouse) protein is Plexin-A2 (Plxna2).